Consider the following 265-residue polypeptide: Undecaprenyl-diphosphatase (265 aa).

The next 8 helical transmembrane spans lie at 1-21 (MDWL…FLPI), 40-60 (GLAF…LAFH), 87-107 (WAVI…ENVI), 113-133 (ASLV…WADV), 151-173 (IIGF…TITA), 188-208 (SFLL…VELI), 214-234 (VAWG…WLCI), and 244-264 (IGML…LVWV).

This sequence belongs to the UppP family.

Its subcellular location is the cell inner membrane. The enzyme catalyses di-trans,octa-cis-undecaprenyl diphosphate + H2O = di-trans,octa-cis-undecaprenyl phosphate + phosphate + H(+). Functionally, catalyzes the dephosphorylation of undecaprenyl diphosphate (UPP). Confers resistance to bacitracin. This is Undecaprenyl-diphosphatase from Chromohalobacter salexigens (strain ATCC BAA-138 / DSM 3043 / CIP 106854 / NCIMB 13768 / 1H11).